We begin with the raw amino-acid sequence, 124 residues long: Fluoride-specific ion channel FluC (124 aa).

A run of 3 helical transmembrane segments spans residues 20 to 40 (LLSIFMIQVFGSSFPFGTLLV), 60 to 80 (ISPEIKALIGIGLLGALTTFS), and 102 to 122 (VLLNVTLCLFMVYLGQQLIFS). Residues glycine 74 and threonine 77 each coordinate Na(+).

It belongs to the fluoride channel Fluc/FEX (TC 1.A.43) family.

Its subcellular location is the cell inner membrane. It carries out the reaction fluoride(in) = fluoride(out). Na(+) is not transported, but it plays an essential structural role and its presence is essential for fluoride channel function. Its function is as follows. Fluoride-specific ion channel. Important for reducing fluoride concentration in the cell, thus reducing its toxicity. The polypeptide is Fluoride-specific ion channel FluC (Shewanella frigidimarina (strain NCIMB 400)).